The sequence spans 361 residues: Phospho-N-acetylmuramoyl-pentapeptide-transferase (361 aa).

The next 10 helical transmembrane spans lie at 17–37, 66–86, 90–110, 129–149, 162–182, 197–217, 232–252, 261–281, 286–306, and 340–360; these read SIYL…LFAG, GTPT…SIFI, TNSL…IGFI, LLFQ…IGLT, ISAY…QIVL, GLAI…AYFT, VGSG…LGFL, IFMG…IAII, LMLP…ILQV, and FWIG…MRGI.

It belongs to the glycosyltransferase 4 family. MraY subfamily. The cofactor is Mg(2+).

It localises to the cell inner membrane. The catalysed reaction is UDP-N-acetyl-alpha-D-muramoyl-L-alanyl-gamma-D-glutamyl-meso-2,6-diaminopimeloyl-D-alanyl-D-alanine + di-trans,octa-cis-undecaprenyl phosphate = di-trans,octa-cis-undecaprenyl diphospho-N-acetyl-alpha-D-muramoyl-L-alanyl-D-glutamyl-meso-2,6-diaminopimeloyl-D-alanyl-D-alanine + UMP. The protein operates within cell wall biogenesis; peptidoglycan biosynthesis. Functionally, catalyzes the initial step of the lipid cycle reactions in the biosynthesis of the cell wall peptidoglycan: transfers peptidoglycan precursor phospho-MurNAc-pentapeptide from UDP-MurNAc-pentapeptide onto the lipid carrier undecaprenyl phosphate, yielding undecaprenyl-pyrophosphoryl-MurNAc-pentapeptide, known as lipid I. The sequence is that of Phospho-N-acetylmuramoyl-pentapeptide-transferase from Fusobacterium nucleatum subsp. nucleatum (strain ATCC 25586 / DSM 15643 / BCRC 10681 / CIP 101130 / JCM 8532 / KCTC 2640 / LMG 13131 / VPI 4355).